The chain runs to 645 residues: Beta-galactosidase BgaA (645 aa).

Arginine 102 lines the substrate pocket. Cysteine 106 lines the Zn(2+) pocket. Asparagine 140 contacts substrate. Glutamate 141 functions as the Proton donor in the catalytic mechanism. Zn(2+)-binding residues include cysteine 150, cysteine 152, and cysteine 155. Glutamate 312 serves as the catalytic Nucleophile. Substrate-binding positions include tryptophan 320 and 360 to 363 (EQMH).

The protein belongs to the glycosyl hydrolase 42 family.

The catalysed reaction is Hydrolysis of terminal non-reducing beta-D-galactose residues in beta-D-galactosides.. Functionally, hydrolyzes chromogen 5-bromo-4-chloro-3-indolyl-beta-D-galactopyranoside (X-Gal) and p-nitrophenyl-beta-D-galactoside (pNPGal). This Thermus sp protein is Beta-galactosidase BgaA.